The sequence spans 1057 residues: Hemophilin receptor (1057 aa).

In terms of domain architecture, TBDR plug spans 168 to 285 (KVYDANRSSV…VGGAVVVKTL (118 aa)). The TBDR beta-barrel domain occupies 296–1057 (SFGAELKVEG…TMKISWTTKF (762 aa)).

This sequence belongs to the TonB-dependent receptor family.

It is found in the cell outer membrane. Part of a high affinity heme acquisition system. Functions as a gateway for heme entry into the bacterial cell, enabling growth on hemoprotein sources. Can acquire heme directly from hemoprotein reservoirs, however, HphA likely enhances the efficiency of this process by delivering heme to HphR. Is essential for virulence, bacterial dissemination and growth in the blood. This is Hemophilin receptor from Acinetobacter baumannii.